A 314-amino-acid chain; its full sequence is 4-hydroxy-3-methylbut-2-enyl diphosphate reductase (314 aa).

Cys12 is a [4Fe-4S] cluster binding site. (2E)-4-hydroxy-3-methylbut-2-enyl diphosphate contacts are provided by His43 and His81. Positions 43 and 81 each coordinate dimethylallyl diphosphate. Residues His43 and His81 each contribute to the isopentenyl diphosphate site. Cys103 lines the [4Fe-4S] cluster pocket. His131 serves as a coordination point for (2E)-4-hydroxy-3-methylbut-2-enyl diphosphate. His131 is a dimethylallyl diphosphate binding site. His131 lines the isopentenyl diphosphate pocket. Glu133 acts as the Proton donor in catalysis. Thr170 is a (2E)-4-hydroxy-3-methylbut-2-enyl diphosphate binding site. [4Fe-4S] cluster is bound at residue Cys198. Positions 226, 228, and 271 each coordinate (2E)-4-hydroxy-3-methylbut-2-enyl diphosphate. Residues Ser226, Asn228, and Ser271 each coordinate dimethylallyl diphosphate. Residues Ser226, Asn228, and Ser271 each contribute to the isopentenyl diphosphate site.

It belongs to the IspH family. It depends on [4Fe-4S] cluster as a cofactor.

It carries out the reaction isopentenyl diphosphate + 2 oxidized [2Fe-2S]-[ferredoxin] + H2O = (2E)-4-hydroxy-3-methylbut-2-enyl diphosphate + 2 reduced [2Fe-2S]-[ferredoxin] + 2 H(+). It catalyses the reaction dimethylallyl diphosphate + 2 oxidized [2Fe-2S]-[ferredoxin] + H2O = (2E)-4-hydroxy-3-methylbut-2-enyl diphosphate + 2 reduced [2Fe-2S]-[ferredoxin] + 2 H(+). It functions in the pathway isoprenoid biosynthesis; dimethylallyl diphosphate biosynthesis; dimethylallyl diphosphate from (2E)-4-hydroxy-3-methylbutenyl diphosphate: step 1/1. The protein operates within isoprenoid biosynthesis; isopentenyl diphosphate biosynthesis via DXP pathway; isopentenyl diphosphate from 1-deoxy-D-xylulose 5-phosphate: step 6/6. Functionally, catalyzes the conversion of 1-hydroxy-2-methyl-2-(E)-butenyl 4-diphosphate (HMBPP) into a mixture of isopentenyl diphosphate (IPP) and dimethylallyl diphosphate (DMAPP). Acts in the terminal step of the DOXP/MEP pathway for isoprenoid precursor biosynthesis. This chain is 4-hydroxy-3-methylbut-2-enyl diphosphate reductase, found in Bacillus pumilus (strain SAFR-032).